The sequence spans 301 residues: Beta-1,3-galactosyltransferase 5 (301 aa).

The Cytoplasmic segment spans residues 1–7; that stretch reads MAFPKMR. Residues 8-28 form a helical; Signal-anchor for type II membrane protein membrane-spanning segment; sequence LMYVCLLVLGALCLYFSMYSL. The Lumenal segment spans residues 29 to 301; the sequence is NLFKEQSFVY…LLDYWQALEN (273 aa). Residues asparagine 130, asparagine 174, and asparagine 231 are each glycosylated (N-linked (GlcNAc...) asparagine).

It belongs to the glycosyltransferase 31 family.

It is found in the golgi apparatus membrane. It catalyses the reaction a globoside Gb4Cer (d18:1(4E)) + UDP-alpha-D-galactose = a globoside GalGb4Cer (d18:1(4E)) + UDP + H(+). The protein operates within protein modification; protein glycosylation. In terms of biological role, catalyzes the transfer of Gal to GlcNAc-based acceptors with a preference for the core3 O-linked glycan GlcNAc(beta1,3)GalNAc structure. Can use glycolipid LC3Cer as an efficient acceptor. The protein is Beta-1,3-galactosyltransferase 5 (B3GALT5) of Pan paniscus (Pygmy chimpanzee).